Consider the following 524-residue polypeptide: DNA damage-binding protein CMR1 (524 aa).

The tract at residues 35 to 79 (EKIIPKPAPPKPKRASAPRAKREPVKRETARPTRQSSRLAGLDAD) is disordered. The segment covering 54–65 (AKREPVKRETAR) has biased composition (basic and acidic residues). WD repeat units follow at residues 184-225 (LVPQ…VKAE), 245-285 (THSR…STEA), 295-332 (LPIS…STAE), 336-376 (LTDQ…GKGD), 385-425 (THDS…KWTA), 447-490 (GRWV…LAQL), and 493-524 (DGIT…CLWM).

This sequence belongs to the WD repeat DDB2/WDR76 family.

Its function is as follows. DNA-binding protein that binds to both single- and double-stranded DNA. Binds preferentially to UV-damaged DNA. May be involved in DNA-metabolic processes. This is DNA damage-binding protein CMR1 from Chaetomium globosum (strain ATCC 6205 / CBS 148.51 / DSM 1962 / NBRC 6347 / NRRL 1970) (Soil fungus).